The sequence spans 207 residues: Guanylate kinase (207 aa).

Residues 5–183 (GTLYIISAPS…ALYELEAIVE (179 aa)) enclose the Guanylate kinase-like domain. 12 to 19 (APSGAGKT) serves as a coordination point for ATP.

Belongs to the guanylate kinase family.

Its subcellular location is the cytoplasm. It carries out the reaction GMP + ATP = GDP + ADP. Functionally, essential for recycling GMP and indirectly, cGMP. In Alcanivorax borkumensis (strain ATCC 700651 / DSM 11573 / NCIMB 13689 / SK2), this protein is Guanylate kinase.